Here is a 511-residue protein sequence, read N- to C-terminus: 2'-acyl-2-O-sulfo-trehalose (hydroxy)phthioceranyltransferase PapA1 (511 aa).

It belongs to the PapA acyltransferase family.

It carries out the reaction a (hydroxy)phthioceranyl-[(hydroxy)phthioceranic acid synthase] + 2'-palmitoyl/stearoyl-2-O-sulfo-alpha,alpha-trehalose = a 3'-(hydroxy)phthioceranyl-2'-palmitoyl/stearoyl-2-O-sulfo-alpha,alpha-trehalose + holo-[(hydroxy)phthioceranic acid synthase].. In terms of biological role, required for the biosynthesis of sulfolipid-1 (SL-1), a major mycobacterial cell wall lipid. Catalyzes the acylation of trehalose-2-sulfate-2'-palmitate (SL659) by adding the (hydroxy)phthioceranoyl group at the 3'-position to yield the diacylated intermediate 2-palmitoyl-3-(C43)-phthioceranyl-alpha, alpha'-D-trehalose-2'-sulfate (SL1278). This is 2'-acyl-2-O-sulfo-trehalose (hydroxy)phthioceranyltransferase PapA1 (papA1) from Mycobacterium tuberculosis (strain CDC 1551 / Oshkosh).